Reading from the N-terminus, the 176-residue chain is Disulfide bond formation protein B (176 aa).

Topologically, residues Met-1–Ala-14 are cytoplasmic. The chain crosses the membrane as a helical span at residues Trp-15–Tyr-31. Residues Phe-32 to Ser-49 are Periplasmic-facing. Cys-41 and Cys-44 are oxidised to a cystine. The chain crosses the membrane as a helical span at residues Ala-50–Pro-65. The Cytoplasmic portion of the chain corresponds to Ser-66–Tyr-71. A helical membrane pass occupies residues Pro-72 to Trp-89. At Lys-90–Gln-144 the chain is on the periplasmic side. Cys-104 and Cys-130 are disulfide-bonded. The chain crosses the membrane as a helical span at residues Trp-145–Ala-163. Residues Gln-164 to Arg-176 lie on the Cytoplasmic side of the membrane.

It belongs to the DsbB family.

The protein resides in the cell inner membrane. Its function is as follows. Required for disulfide bond formation in some periplasmic proteins. Acts by oxidizing the DsbA protein. The sequence is that of Disulfide bond formation protein B from Pectobacterium atrosepticum (strain SCRI 1043 / ATCC BAA-672) (Erwinia carotovora subsp. atroseptica).